Reading from the N-terminus, the 2967-residue chain is BEACH domain-containing protein lvsD (2967 aa).

Disordered regions lie at residues 1-25 (MSSPLKFPFKQQQQQQQQQRSRIGG), 322-364 (NNNN…SSNS), 588-615 (ILSIDPNNNNNNNNNNNNNIQQPQQQQL), 917-936 (NNSNNNNNNNNSNSNNNNIN), 1077-1105 (GGSNNNNNNNNNNSNNNKDKIDSNNKDKD), 1173-1220 (NTSS…SDHR), 1583-1613 (NNNSGNNNSGNNINNNNNNNNNNTNLNNNEN), 1831-1859 (QQQQQQSQQSLQLPPSPSISNAGSSSSVV), 1921-2009 (PQKT…TLNN), and 2029-2062 (KSTLTSSSSSSPSSNNNNGNSNNNSNNNNNNNKN). A BEACH 1 domain is found at 229–491 (MTFRKAPSSV…QDLFRKGSNY (263 aa)). A compositionally biased stretch (low complexity) spans 1079–1092 (SNNNNNNNNNNSNN). Positions 1093–1105 (NKDKIDSNNKDKD) are enriched in basic and acidic residues. Composition is skewed to low complexity over residues 1185 to 1194 (PLLTSTKSMS), 1583 to 1611 (NNNSGNNNSGNNINNNNNNNNNNTNLNNN), 1831 to 1857 (QQQQQQSQQSLQLPPSPSISNAGSSSS), 1926 to 1980 (QNQH…SFSN), 1993 to 2006 (NIITTTTTTTTTST), and 2034 to 2062 (SSSSSSPSSNNNNGNSNNNSNNNNNNNKN). The BEACH-type PH domain occupies 2060–2162 (NKNIKLEFST…ICAQILKLIG (103 aa)). BEACH domains lie at 2202–2492 (TPQQ…HPQR) and 2628–2785 (NSRV…IYSN). WD repeat units follow at residues 2658–2710 (NHKS…SDHH) and 2720–2761 (GHNF…KSIQ). Disordered stretches follow at residues 2798–2820 (SATTTTTTRDDESSSSSLSSSNT) and 2915–2934 (PSTSVSGDSNSNNNNNNNGN). Low complexity-rich tracts occupy residues 2811–2820 (SSSSLSSSNT) and 2924–2934 (NSNNNNNNNGN).

The protein is BEACH domain-containing protein lvsD (lvsD) of Dictyostelium discoideum (Social amoeba).